Reading from the N-terminus, the 481-residue chain is UDP-N-acetylmuramate--L-alanine ligase (481 aa).

Position 123 to 129 (123 to 129 (GTHGKTT)) interacts with ATP.

Belongs to the MurCDEF family.

Its subcellular location is the cytoplasm. The catalysed reaction is UDP-N-acetyl-alpha-D-muramate + L-alanine + ATP = UDP-N-acetyl-alpha-D-muramoyl-L-alanine + ADP + phosphate + H(+). It participates in cell wall biogenesis; peptidoglycan biosynthesis. Its function is as follows. Cell wall formation. In Pseudomonas fluorescens (strain SBW25), this protein is UDP-N-acetylmuramate--L-alanine ligase.